The chain runs to 99 residues: DNA-directed RNA polymerase subunit omega (99 aa).

It belongs to the RNA polymerase subunit omega family. As to quaternary structure, the RNAP catalytic core consists of 2 alpha, 1 beta, 1 beta' and 1 omega subunit. When a sigma factor is associated with the core the holoenzyme is formed, which can initiate transcription.

The catalysed reaction is RNA(n) + a ribonucleoside 5'-triphosphate = RNA(n+1) + diphosphate. Promotes RNA polymerase assembly. Latches the N- and C-terminal regions of the beta' subunit thereby facilitating its interaction with the beta and alpha subunits. This Xylella fastidiosa (strain 9a5c) protein is DNA-directed RNA polymerase subunit omega (rpoZ).